The chain runs to 296 residues: CCAAT/enhancer-binding protein beta (296 aa).

The segment at 1-22 is required for Lys-133 sumoylation; it reads MHRLLAWDAACLPPPPAAFRPM. Residue Arg3 is modified to Asymmetric dimethylarginine; by CARM1. Residues 22-104 form a required for MYC transcriptional repression region; the sequence is MEVANFYYEP…YGAKPSKKPA (83 aa). Lys39 bears the N6-acetyllysine; alternate mark. Lys39 carries the N6-methylated lysine; alternate modification. Lys98 and Lys101 each carry N6-acetyllysine; by KAT2A and KAT2B. Lys102 carries the post-translational modification N6-acetyllysine; by KAT2A and KAT2B; alternate. Glycyl lysine isopeptide (Lys-Gly) (interchain with G-Cter in SUMO2); alternate cross-links involve residues Lys102 and Lys133. Lys133 participates in a covalent cross-link: Glycyl lysine isopeptide (Lys-Gly) (interchain with G-Cter in SUMO); alternate. A Glycyl lysine isopeptide (Lys-Gly) (interchain with G-Cter in SUMO2) cross-link involves residue Lys144. Residues 171–199 form a disordered region; the sequence is SGSSGSLSTSSSSSPPGTPSPADAKAAPA. The residue at position 179 (Thr179) is a Phosphothreonine; by GSK3-beta. O-linked (GlcNAc) serine glycans are attached at residues Ser180 and Ser181. Ser184 is modified (phosphoserine; by GSK3-beta). Phosphothreonine; by RPS6KA1, CDK2 and MAPK is present on Thr188. Glycyl lysine isopeptide (Lys-Gly) (interchain with G-Cter in SUMO2) cross-links involve residues Lys211 and Lys213. Thr217 is modified (phosphothreonine; by RPS6KA1 and PKC/PRKCA). One can recognise a bZIP domain in the interval 222–285; the sequence is SDEYKMRRER…STLRNLFKQL (64 aa). The basic motif stretch occupies residues 226-246; the sequence is KMRRERNNIAVRKSRDKAKMR. A Phosphoserine; by PKC/PRKCA modification is found at Ser239. Positions 248-255 are leucine-zipper; that stretch reads LETQHKVL. Ser276 is subject to Phosphoserine; by CaMK2. Lys283 participates in a covalent cross-link: Glycyl lysine isopeptide (Lys-Gly) (interchain with G-Cter in SUMO2).

The protein belongs to the bZIP family. C/EBP subfamily. As to quaternary structure, binds DNA as a homodimer and as a heterodimer. Interacts with ATF4. Binds DNA as a heterodimer with ATF4. Interacts with MYB; within the complex, MYB and CEBPB bind to different promoter regions. Can form stable heterodimers with CEBPA, CEBPD and CEBPE. Interacts with SIX1. Isoform 2 and isoform 3 also form heterodimers. Interacts with TRIM28 and PTGES2. Interacts with PRDM16. Interacts with CCDC85B. Forms a complex with THOC5. Interacts with ZNF638; this interaction increases transcriptional activation. Interacts with CIDEA and CIDEC. Interaction with CIDEA increases transcriptional activation of a subset of CEBPB downstream target genes, including ID2, IGF1, PRLR, SOCS1, SOCS3, XDH. Interaction with CIDEC increases transcriptional activation of SOCS1, SOCS3, TGFB1, TGFBR1, ID2 and XDH. Interacts with DDIT3/CHOP. Interacts with EP300; recruits EP300 to chromatin. Interacts with RORA; the interaction disrupts interaction with EP300. Interacts (not methylated) with MED23, MED26, SMARCA2, SMARCB1 and SMARCC1. Interacts with KAT2A and KAT2B. Interacts with ATF5; EP300 is required for ATF5 and CEBPB interaction and DNA binding. Interacts with NFE2L1; the heterodimer represses expression of DSPP during odontoblast differentiation. Post-translationally, sumoylated by polymeric chains of SUMO2 or SUMO3. Sumoylation at Lys-133 is required for inhibition of T-cells proliferation. In adipocytes, sumoylation at Lys-133 by PIAS1 leads to ubiquitination and subsequent proteasomal degradation. Desumoylated by SENP2, which abolishes ubiquitination and stabilizes protein levels. In terms of processing, ubiquitinated, leading to proteasomal degradation. Phosphorylated at Thr-188 by MAPK and CDK2, serves to prime phosphorylation at Thr-179 and Ser-184 by GSK3B and acquire DNA-binding as well as transactivation activities, required to induce adipogenesis. MAPK and CDK2 act sequentially to maintain Thr-188 in the primed phosphorylated state during mitotical cloning expansion and thereby progression of terminal differentiation. Phosphorylation at Thr-217 enhances transactivation activity. Phosphorylation at Ser-276 in response to calcium increases transactivation activity. Phosphorylated at Thr-188 by RPS6KA1. Post-translationally, O-glycosylated, glycosylation at Ser-180 and Ser-181 prevents phosphorylation on Thr-188, Ser-184 and Thr-179 and DNA binding activity which delays the adipocyte differentiation program. In terms of processing, acetylated. Acetylation at Lys-39 is an important and dynamic regulatory event that contributes to its ability to transactivate target genes, including those associated with adipogenesis and adipocyte function. Deacetylation by HDAC1 represses its transactivation activity. Acetylated by KAT2A and KAT2B within a cluster of lysine residues between amino acids 98-102, this acetylation is strongly induced by glucocorticoid treatment and enhances transactivation activity. Methylated. Methylation at Arg-3 by CARM1 and at Lys-39 by EHMT2, inhibits transactivation activity. Methylation is probably inhibited by phosphorylation at Thr-188. As to expression, abundantly expressed in myoblasts. Enriched in brown adipose tissue (BAT) versus white adipose tissue (WAT). Expressed in hepatocytes (at protein level). Expressed in T lymphocytes. The expression in granulosa cells of antral follicles is induced by luteinizing hormone. Expressed in chondrocytes and osteoblasts (at protein level).

The protein resides in the nucleus. Its subcellular location is the cytoplasm. Important transcription factor regulating the expression of genes involved in immune and inflammatory responses. Also plays a significant role in adipogenesis, as well as in the gluconeogenic pathway, liver regeneration, and hematopoiesis. The consensus recognition site is 5'-T[TG]NNGNAA[TG]-3'. Its functional capacity is governed by protein interactions and post-translational protein modifications. During early embryogenesis, plays essential and redundant roles with CEBPA. Has a promitotic effect on many cell types such as hepatocytes and adipocytes but has an antiproliferative effect on T-cells by repressing MYC expression, facilitating differentiation along the T-helper 2 lineage. Binds to regulatory regions of several acute-phase and cytokines genes and plays a role in the regulation of acute-phase reaction and inflammation. Also plays a role in intracellular bacteria killing. During adipogenesis, is rapidly expressed and, after activation by phosphorylation, induces CEBPA and PPARG, which turn on the series of adipocyte genes that give rise to the adipocyte phenotype. The delayed transactivation of the CEBPA and PPARG genes by CEBPB appears necessary to allow mitotic clonal expansion and thereby progression of terminal differentiation. Essential for female reproduction because of a critical role in ovarian follicle development. Restricts osteoclastogenesis. Together with NFE2L1; represses expression of DSPP during odontoblast differentiation. Functionally, essential for gene expression induction in activated macrophages. Plays a major role in immune responses such as CD4(+) T-cell response, granuloma formation and endotoxin shock. Not essential for intracellular bacteria killing. Its function is as follows. Acts as a dominant negative through heterodimerization with isoform 2. Promotes osteoblast differentiation and osteoclastogenesis. The polypeptide is CCAAT/enhancer-binding protein beta (Mus musculus (Mouse)).